Reading from the N-terminus, the 198-residue chain is MSKVLVLKSSILGGYSQSALLVDHLIGKWEDQGATITVRDLAGKDVLPMVDGEIASGLRGGDDLTARQQEMLDLSNALVEELKANDTIVITAPMYNFNIPTQLKNWIDFVARAGVTFTYTENGPKGLVEGKRAVLITTRGGAHKDGPTDHIVPFLKTFLGFIGITDVEVVYGEALNMGPEANQKGISEAKQSLDALTV.

FMN-binding positions include S10, 16-18, 94-97, and 138-141; these read SQS, MYNF, and TRGG.

It belongs to the azoreductase type 1 family. Homodimer. Requires FMN as cofactor.

The enzyme catalyses 2 a quinone + NADH + H(+) = 2 a 1,4-benzosemiquinone + NAD(+). The catalysed reaction is N,N-dimethyl-1,4-phenylenediamine + anthranilate + 2 NAD(+) = 2-(4-dimethylaminophenyl)diazenylbenzoate + 2 NADH + 2 H(+). Quinone reductase that provides resistance to thiol-specific stress caused by electrophilic quinones. Its function is as follows. Also exhibits azoreductase activity. Catalyzes the reductive cleavage of the azo bond in aromatic azo compounds to the corresponding amines. This is FMN-dependent NADH:quinone oxidoreductase from Shewanella sp. (strain MR-4).